Here is a 258-residue protein sequence, read N- to C-terminus: Serine protease VLSP-3 (258 aa).

An N-terminal signal peptide occupies residues 1–18 (MVLIRVLANLLVLQLSYA). The propeptide occupies 19 to 24 (QKSSEL). The Peptidase S1 domain maps to 25–249 (VIGGDECNIN…YTDWIQSIIA (225 aa)). Cystine bridges form between Cys31/Cys163, Cys50/Cys66, Cys98/Cys256, Cys142/Cys210, Cys174/Cys189, and Cys200/Cys225. Residue Asn44 is glycosylated (N-linked (GlcNAc...) asparagine). Catalysis depends on His65, which acts as the Charge relay system. N-linked (GlcNAc...) asparagine glycans are attached at residues Asn79 and Asn103. Residue Asp110 is the Charge relay system of the active site. Residues Asn154 and Asn170 are each glycosylated (N-linked (GlcNAc...) asparagine). Residue Ser204 is the Charge relay system of the active site. N-linked (GlcNAc...) asparagine glycosylation occurs at Asn251.

It belongs to the peptidase S1 family. Snake venom subfamily. As to quaternary structure, monomer. In terms of tissue distribution, expressed by the venom gland.

The protein resides in the secreted. In terms of biological role, snake venom serine protease that may act in the hemostasis system of the prey. In Macrovipera lebetinus (Levantine viper), this protein is Serine protease VLSP-3.